We begin with the raw amino-acid sequence, 424 residues long: Enolase (424 aa).

Glutamine 163 is a binding site for (2R)-2-phosphoglycerate. Glutamate 205 functions as the Proton donor in the catalytic mechanism. Mg(2+) contacts are provided by aspartate 242, glutamate 285, and aspartate 312. Positions 337, 366, 367, and 388 each coordinate (2R)-2-phosphoglycerate. Lysine 337 serves as the catalytic Proton acceptor.

It belongs to the enolase family. Mg(2+) serves as cofactor.

The protein localises to the cytoplasm. It is found in the secreted. It localises to the cell surface. The catalysed reaction is (2R)-2-phosphoglycerate = phosphoenolpyruvate + H2O. The protein operates within carbohydrate degradation; glycolysis; pyruvate from D-glyceraldehyde 3-phosphate: step 4/5. Its function is as follows. Catalyzes the reversible conversion of 2-phosphoglycerate (2-PG) into phosphoenolpyruvate (PEP). It is essential for the degradation of carbohydrates via glycolysis. The protein is Enolase of Sphingopyxis alaskensis (strain DSM 13593 / LMG 18877 / RB2256) (Sphingomonas alaskensis).